Reading from the N-terminus, the 184-residue chain is Oligoribonuclease (184 aa).

An Exonuclease domain is found at 8-171 (LIWIDLEMTG…DDIRESIAEL (164 aa)). Residue Y129 is part of the active site.

Belongs to the oligoribonuclease family.

It is found in the cytoplasm. In terms of biological role, 3'-to-5' exoribonuclease specific for small oligoribonucleotides. This is Oligoribonuclease from Pasteurella multocida (strain Pm70).